Consider the following 127-residue polypeptide: Large ribosomal subunit protein bL12 (127 aa).

N6-methyllysine is present on residues Lys77 and Lys88.

This sequence belongs to the bacterial ribosomal protein bL12 family. Homodimer. Part of the ribosomal stalk of the 50S ribosomal subunit. Forms a multimeric L10(L12)X complex, where L10 forms an elongated spine to which 2 to 4 L12 dimers bind in a sequential fashion. Binds GTP-bound translation factors.

Forms part of the ribosomal stalk which helps the ribosome interact with GTP-bound translation factors. Is thus essential for accurate translation. The sequence is that of Large ribosomal subunit protein bL12 from Nitratidesulfovibrio vulgaris (strain DSM 19637 / Miyazaki F) (Desulfovibrio vulgaris).